Here is a 1187-residue protein sequence, read N- to C-terminus: Intraflagellar transport protein 122 homolog (1187 aa).

8 WD repeats span residues 16 to 54, 57 to 97, 99 to 135, 137 to 175, 180 to 223, 225 to 264, 266 to 306, and 459 to 498; these read KVEQCIYDLAFRPDGSQLIVAAGNRVLVYDTADGTLIQP, GHKD…LKYT, NDSIQCVSYNPVTHQLASCSSGDFGLWSPEQKSVSKH, VSSKITCCGWTNDGQYLALGMMNGVVSIRNKNGEEKVKI, GSSS…IGKD, SLTFDPCCVSFFSKGEYMVLCGSDRQAALYTRDGVRLGSI, EQNA…HGLY, and KQNTSVRCLDMSSNRSRLAVVDEHNTCLVYDIHTRELLFQ. Residues 1070 to 1094 form a disordered region; that stretch reads KSWQEMSSGESQCLKLEDGPDDPED.

Component of the IFT complex A (IFT-A) complex.

The protein resides in the cell projection. It is found in the cilium. It localises to the cytoplasm. Its subcellular location is the cytoskeleton. The protein localises to the cilium basal body. In terms of biological role, required for cilia formation during embryonal development. Acts as a negative regulator of Shh signaling. The protein is Intraflagellar transport protein 122 homolog (ift122) of Danio rerio (Zebrafish).